Here is a 216-residue protein sequence, read N- to C-terminus: NADH-quinone oxidoreductase subunit C (216 aa).

This sequence belongs to the complex I 30 kDa subunit family. In terms of assembly, NDH-1 is composed of 14 different subunits. Subunits NuoB, C, D, E, F, and G constitute the peripheral sector of the complex.

Its subcellular location is the cell inner membrane. It catalyses the reaction a quinone + NADH + 5 H(+)(in) = a quinol + NAD(+) + 4 H(+)(out). In terms of biological role, NDH-1 shuttles electrons from NADH, via FMN and iron-sulfur (Fe-S) centers, to quinones in the respiratory chain. The immediate electron acceptor for the enzyme in this species is believed to be ubiquinone. Couples the redox reaction to proton translocation (for every two electrons transferred, four hydrogen ions are translocated across the cytoplasmic membrane), and thus conserves the redox energy in a proton gradient. The protein is NADH-quinone oxidoreductase subunit C of Francisella tularensis subsp. holarctica (strain FTNF002-00 / FTA).